A 954-amino-acid chain; its full sequence is Glycine dehydrogenase (decarboxylating) (954 aa).

The residue at position 700 (K700) is an N6-(pyridoxal phosphate)lysine.

It belongs to the GcvP family. As to quaternary structure, the glycine cleavage system is composed of four proteins: P, T, L and H. Pyridoxal 5'-phosphate serves as cofactor.

It carries out the reaction N(6)-[(R)-lipoyl]-L-lysyl-[glycine-cleavage complex H protein] + glycine + H(+) = N(6)-[(R)-S(8)-aminomethyldihydrolipoyl]-L-lysyl-[glycine-cleavage complex H protein] + CO2. In terms of biological role, the glycine cleavage system catalyzes the degradation of glycine. The P protein binds the alpha-amino group of glycine through its pyridoxal phosphate cofactor; CO(2) is released and the remaining methylamine moiety is then transferred to the lipoamide cofactor of the H protein. In Dinoroseobacter shibae (strain DSM 16493 / NCIMB 14021 / DFL 12), this protein is Glycine dehydrogenase (decarboxylating).